The primary structure comprises 372 residues: tRNA-specific 2-thiouridylase MnmA (372 aa).

ATP is bound by residues 17–24 (GMSGGVDS) and M43. Positions 103-105 (NPD) are interaction with target base in tRNA. The active-site Nucleophile is C108. C108 and C205 are disulfide-bonded. G133 provides a ligand contact to ATP. An interaction with tRNA region spans residues 155–157 (KDQ). C205 acts as the Cysteine persulfide intermediate in catalysis. The interaction with tRNA stretch occupies residues 317-318 (RY).

It belongs to the MnmA/TRMU family.

It localises to the cytoplasm. The enzyme catalyses S-sulfanyl-L-cysteinyl-[protein] + uridine(34) in tRNA + AH2 + ATP = 2-thiouridine(34) in tRNA + L-cysteinyl-[protein] + A + AMP + diphosphate + H(+). In terms of biological role, catalyzes the 2-thiolation of uridine at the wobble position (U34) of tRNA, leading to the formation of s(2)U34. This is tRNA-specific 2-thiouridylase MnmA from Shewanella sediminis (strain HAW-EB3).